A 97-amino-acid polypeptide reads, in one-letter code: Citrate lyase acyl carrier protein (97 aa).

Residue serine 14 is modified to O-(phosphoribosyl dephospho-coenzyme A)serine.

This sequence belongs to the CitD family. In terms of assembly, oligomer with a subunit composition of (alpha,beta,gamma)6.

Its subcellular location is the cytoplasm. In terms of biological role, covalent carrier of the coenzyme of citrate lyase. The polypeptide is Citrate lyase acyl carrier protein (Rhodopseudomonas palustris (strain BisA53)).